The sequence spans 186 residues: Tumor necrosis factor, alpha-induced protein 8-like protein 2 B (186 aa).

It belongs to the TNFAIP8 family. TNFAIP8L2 subfamily.

Functionally, acts as a negative regulator of innate and adaptive immunity by maintaining immune homeostasis. Negative regulator of Toll-like receptor and T-cell receptor function. Prevents hyperresponsiveness of the immune system and maintains immune homeostasis. Inhibits jun/ap1 and NF-kappa-B activation. Promotes Fas-induced apoptosis. This Danio rerio (Zebrafish) protein is Tumor necrosis factor, alpha-induced protein 8-like protein 2 B (tnfaip8l2b).